The primary structure comprises 463 residues: Phosphomethylpyrimidine synthase (463 aa).

Residues Asn80, Met109, Tyr138, His173, 193–195 (SRG), 234–237 (DGLR), and Glu273 each bind substrate. His277 serves as a coordination point for Zn(2+). Substrate is bound at residue Tyr300. His341 is a binding site for Zn(2+). Positions 421, 424, and 429 each coordinate [4Fe-4S] cluster.

The protein belongs to the ThiC family. Homodimer. The cofactor is [4Fe-4S] cluster.

It carries out the reaction 5-amino-1-(5-phospho-beta-D-ribosyl)imidazole + S-adenosyl-L-methionine = 4-amino-2-methyl-5-(phosphooxymethyl)pyrimidine + CO + 5'-deoxyadenosine + formate + L-methionine + 3 H(+). It functions in the pathway cofactor biosynthesis; thiamine diphosphate biosynthesis. Its function is as follows. Catalyzes the synthesis of the hydroxymethylpyrimidine phosphate (HMP-P) moiety of thiamine from aminoimidazole ribotide (AIR) in a radical S-adenosyl-L-methionine (SAM)-dependent reaction. The chain is Phosphomethylpyrimidine synthase from Anaeromyxobacter sp. (strain K).